Consider the following 109-residue polypeptide: Larval cuticle protein 1 (109 aa).

Positions M1–A14 are cleaved as a signal peptide. Positions E34–A107 constitute a Chitin-binding type R&amp;R domain.

Component of the cuticle of the larva of Helicoverpa armigera. In Helicoverpa armigera (Cotton bollworm), this protein is Larval cuticle protein 1 (LCP1).